A 1293-amino-acid chain; its full sequence is MKLLLLNILLLCCLADKLNEFSADIDYYDLGIMSRGKNAGSWYHSYEHQYDVFYYLAMQPWRHFVWTTCTTTDGNKECYKYTINEDHNVKVEDINKTDIKQDFCQKEYAYPIEKYEVDWDNVPVDEQRIESVDINGKTCFKYAAKRPLAYVYLNTKMTYATKTEAYDVCRMDFIGGRSITFRSFNTENKAFIDQYNTNTTSKCLLKVYDNNVNTHLAIIFGITDSTVIKSLQENLSLLSQLKTVKGVTLYYLKDDTYFTVNITLDQLKYDTLVKYTAGTGQVDPLINIAKNDLATKVADKSKDKNANDKIKRGTMIVLMDTALGSEFNAETEFDRKNISVHTVVLNRNKDPKITRSALRLVSLGPHYHEFTGNDEVNATITALFKGIRANLTERCDRDKCSGFCDAMNRCTCPMCCENDCFYTSCDVETGSCIPWPKAKPKAKKECPATCVGSYECKDLEGCVVTKYNDTCQPKVKCMVPYCDNDKNLTEVCKQKANCEADQKPSSDGYCWSYTCDQTTGFCKKDKRGKEMCTGKTNNCQEYVCDSEQRCSVRDKVCVKTSPYIEMSCYVAKCNLNTGMCENRLSCDTYSSCGGDSTGSVCKCDSTTGNKCQCNKVKNGNYCNSKNHEICDYTGTTPQCKVSNCTEDLVRDGCLIKRCNETSKTTYWENVDCSNTKIEFAKDDKSETMCKQYYSTTCLNGKCVVQAVGDVSNVGCGYCSMGTDNIITYHDDCNSRKSQCGNFNGKCIKGNDNSYSCVFEKDKTSSKSDNDICAECSSLTCPADTTYRTYTYDSKTGTCKATVQPTPACSVCESGKFVEKCKDQKLERKVTLEDGKEYKYNIPKDCVNEQCIPRTYIDCLGNDDNFKSIYNFYLPCQAYVTATYHYSSLFNLTSYKLHLPQSEEFMKEADKEAYCTYEITTRECKTCSLIETREKVQEVDLCAEETKNGGVPFKCKNNNCIIDPNFDCQPIECKIQEIVITEKDGIKTTTCKNTTKTTCDTNNKRIEDARKAFIEGKEGIEQVECASTVCQNDNSCPIITDVEKCNQNTEVDYGCKAMTGECDGTTYLCKFVQLTDDPSLDSEHFRTKSGVELNNACLKYKCVESKGSDGKITHKWEIDTERSNANPKPRNPCETATCNQTTGETIYTKKTCTVSEEFPTITPNQGRCFYCQCSYLDGSSVLTMYGETDKEYYDLDACGNCRVWNQTDRTQQLNNHTECILAGEINNVGAIAAATTVAVVVVAVVVALIVVSIGLFKTYQLVSSAMKNAITITNENAEYVGADNEATNAATFNG.

The N-terminal stretch at Met1–Ala15 is a signal peptide. At Asp16–Thr1234 the chain is on the extracellular side. 16 N-linked (GlcNAc...) asparagine glycosylation sites follow: Asn95, Asn198, Asn234, Asn261, Asn337, Asn377, Asn390, Asn468, Asn487, Asn643, Asn659, Asn890, Asn992, Asn1138, Asn1204, and Asn1214. The chain crosses the membrane as a helical span at residues Thr1235 to Phe1255. Residues Lys1256–Gly1293 are Cytoplasmic-facing.

In terms of assembly, heterodimer composed of a 170 kDa heavy subunit (hgl) and a 31/35 kDa light subunit (lgl); disulfide-linked. In terms of processing, N-glycosylated.

The protein localises to the cell membrane. Its function is as follows. Lectin which binds galactose and N-acetyl-D-galactosamine of host glycoproteins and thus mediates adhesion to host cells. Mediates adherence to host colonic mucins, an essential step for pathogenic tissue invasion. The protein is Galactose/N-acetyl-D-galactosamine lectin heavy subunit 1 of Entamoeba histolytica (strain ATCC 30459 / HM-1:IMSS / ABRM).